The primary structure comprises 343 residues: Heat-inducible transcription repressor HrcA (343 aa).

Belongs to the HrcA family.

Negative regulator of class I heat shock genes (grpE-dnaK-dnaJ and groELS operons). Prevents heat-shock induction of these operons. The protein is Heat-inducible transcription repressor HrcA of Mycobacterium tuberculosis (strain ATCC 25177 / H37Ra).